Reading from the N-terminus, the 276-residue chain is F420-dependent methylenetetrahydromethanopterin dehydrogenase (276 aa).

The segment at 253-276 is disordered; that stretch reads TVLRTPHGKEGKTLSKKDLLAKPE. Over residues 259-276 the composition is skewed to basic and acidic residues; that stretch reads HGKEGKTLSKKDLLAKPE.

This sequence belongs to the MTD family. Found to be tightly associated with methyl-coenzyme M methylreductase.

It catalyses the reaction 5,10-methylenetetrahydromethanopterin + oxidized coenzyme F420-(gamma-L-Glu)(n) + 2 H(+) = 5,10-methenyl-5,6,7,8-tetrahydromethanopterin + reduced coenzyme F420-(gamma-L-Glu)(n). The protein operates within one-carbon metabolism; methanogenesis from CO(2); 5,10-methylene-5,6,7,8-tetrahydromethanopterin from 5,10-methenyl-5,6,7,8-tetrahydromethanopterin (coenzyme F420 route): step 1/1. Its activity is regulated as follows. Activity requires salt; 100 mM sodium or potassium salts of chloride, phosphate or sulfate are equally effective. Not inactivated by O(2). Inhibited by hydrogen-producing 5,10-methenyltetrahydromethanopterin hydrogenase which has a higher affinity for their shared substrate. Enzyme is O(2)-stable and strictly dependent on coenzyme F420. In terms of biological role, catalyzes the reversible reduction of methenyl-H(4)MPT(+) to methylene-H(4)MPT. This is F420-dependent methylenetetrahydromethanopterin dehydrogenase from Methanothermobacter marburgensis (strain ATCC BAA-927 / DSM 2133 / JCM 14651 / NBRC 100331 / OCM 82 / Marburg) (Methanobacterium thermoautotrophicum).